Reading from the N-terminus, the 117-residue chain is Transcription elongation factor A protein-like 8 (117 aa).

Positions Met1–Leu82 are disordered. Positions Asn41–Leu82 are enriched in basic and acidic residues. Positions Glu73–His100 form a coiled coil.

Belongs to the TFS-II family. TFA subfamily.

It localises to the nucleus. May be involved in transcriptional regulation. This Mus musculus (Mouse) protein is Transcription elongation factor A protein-like 8 (Tceal8).